The primary structure comprises 363 residues: UDP-N-acetylglucosamine--N-acetylmuramyl-(pentapeptide) pyrophosphoryl-undecaprenol N-acetylglucosamine transferase (363 aa).

UDP-N-acetyl-alpha-D-glucosamine-binding positions include 10-12, N124, S195, I249, and Q294; that span reads TGG.

Belongs to the glycosyltransferase 28 family. MurG subfamily.

Its subcellular location is the cell membrane. The enzyme catalyses Mur2Ac(oyl-L-Ala-gamma-D-Glu-L-Lys-D-Ala-D-Ala)-di-trans,octa-cis-undecaprenyl diphosphate + UDP-N-acetyl-alpha-D-glucosamine = beta-D-GlcNAc-(1-&gt;4)-Mur2Ac(oyl-L-Ala-gamma-D-Glu-L-Lys-D-Ala-D-Ala)-di-trans,octa-cis-undecaprenyl diphosphate + UDP + H(+). The protein operates within cell wall biogenesis; peptidoglycan biosynthesis. Cell wall formation. Catalyzes the transfer of a GlcNAc subunit on undecaprenyl-pyrophosphoryl-MurNAc-pentapeptide (lipid intermediate I) to form undecaprenyl-pyrophosphoryl-MurNAc-(pentapeptide)GlcNAc (lipid intermediate II). The protein is UDP-N-acetylglucosamine--N-acetylmuramyl-(pentapeptide) pyrophosphoryl-undecaprenol N-acetylglucosamine transferase of Leuconostoc mesenteroides subsp. mesenteroides (strain ATCC 8293 / DSM 20343 / BCRC 11652 / CCM 1803 / JCM 6124 / NCDO 523 / NBRC 100496 / NCIMB 8023 / NCTC 12954 / NRRL B-1118 / 37Y).